Here is a 257-residue protein sequence, read N- to C-terminus: Protein UL24 homolog (257 aa).

The tract at residues 193-257 is disordered; sequence KKPKMDRGGK…PRAGPACSGP (65 aa).

The protein belongs to the herpesviridae UL24 family.

The protein localises to the virion. Its subcellular location is the host cytoplasm. The protein resides in the host nucleus. It is found in the host nucleolus. It localises to the host Golgi apparatus. Functionally, may participate in nuclear egress of viral particles. Plays a role in the dispersal of several host nucleolar proteins including NCL/nucleolin and NPM1. Since deletion of host NCL/nucleolin negatively impact on nuclear egress, UL24 supposedly acts on this process through its effect on host nucleoli. Induces cell cycle arrest in host cells at the G2/M phase following by apoptosis. The mechanism involves the inhibition of host mitotic complex cyclin-B/CDK1. This is Protein UL24 homolog (ORF20) from Homo sapiens (Human).